The chain runs to 650 residues: Chaperone protein DnaK (650 aa).

Thr-200 carries the phosphothreonine; by autocatalysis modification. Residues 611 to 636 (AQQAGAAGAAGAAAEGASAQGGAQPA) are compositionally biased toward low complexity. The tract at residues 611–650 (AQQAGAAGAAGAAAEGASAQGGAQPADDVVDADFKEVKKD) is disordered.

The protein belongs to the heat shock protein 70 family.

Its function is as follows. Acts as a chaperone. In Burkholderia mallei (strain NCTC 10247), this protein is Chaperone protein DnaK.